The chain runs to 601 residues: uncharacterized protein (601 aa).

The protein belongs to the chlamydial CPn_1016/CT_858/TC_0248 family.

This is an uncharacterized protein from Chlamydia muridarum (strain MoPn / Nigg).